Here is a 99-residue protein sequence, read N- to C-terminus: Transposase InsE for insertion sequence IS3A (99 aa).

A disordered region spans residues 1-21; that stretch reads MTKTVSTSKKPRKQHSPEFRS.

This sequence belongs to the transposase 8 family.

Involved in the transposition of the insertion sequence IS3. This chain is Transposase InsE for insertion sequence IS3A (insE1), found in Escherichia coli (strain K12).